We begin with the raw amino-acid sequence, 470 residues long: Choline/ethanolamine transporter flvcr2a (470 aa).

At 1 to 23 (MCDKADNHIDVQPEGNLEVSSVS) the chain is on the cytoplasmic side. Residues 24–48 (STRLYRRRWVILLLFSSYSLCNAFQ) form a helical membrane-spanning segment. 3 residues coordinate choline: Asn45, Ala46, and Trp49. Residues 49 to 66 (WIQYGIINNIFMKFYQVS) lie on the Extracellular side of the membrane. A helical transmembrane segment spans residues 67-94 (SFAVDWLSMVYMLTYIPFIFPVTWLLER). At 95–96 (KG) the chain is on the cytoplasmic side. The chain crosses the membrane as a helical span at residues 97–116 (LRVVALLAASINCAGTWIKV). Topologically, residues 117-123 (ASVQPSL) are extracellular. A helical membrane pass occupies residues 124 to 152 (FWVTMLGQFACSCAQVFILGMPSQVASVW). Gln138 and Leu142 together coordinate choline. The Cytoplasmic portion of the chain corresponds to 153 to 157 (FGSDE). Residues 158-183 (VSTACAIGVFGNQLGIAIGFLVPPVL) form a helical membrane-spanning segment. The Extracellular segment spans residues 184–188 (VPNVE). A helical transmembrane segment spans residues 189–218 (DMGELAEHISIMFYITAAVATLIFLLVVFV). Residues 219-254 (FQEKPETPPSLAQVALRNMPTGQHSYLASIARLMCN) are Cytoplasmic-facing. A helical membrane pass occupies residues 255 to 285 (KPFILLLISYGLNVGSFYAVSTLLNRMIIEH). Position 272 (Tyr272) interacts with choline. Residues 286-289 (YPGE) are Extracellular-facing. A helical membrane pass occupies residues 290 to 318 (EVNAGRIGLTLVVAGVVGSLICGVWLDKT). The Cytoplasmic portion of the chain corresponds to 319–320 (KT). The helical transmembrane segment at 321-343 (YKQTTLSVYLLSFVGMLIYSFTL) threads the bilayer. Residues 344–346 (NLG) are Extracellular-facing. Residues 347 to 376 (HLWLVFLTSGVLGFFMTGYLPLGFEFAVEL) form a helical membrane-spanning segment. The Cytoplasmic segment spans residues 377–384 (TYPESEGT). Residues 385-410 (SSGLLNCSAQVFGIAFTIIQGKIIDH) traverse the membrane as a helical segment. Residue Gln394 participates in choline binding. Residues 411–412 (FG) are Extracellular-facing. A helical transmembrane segment spans residues 413-435 (TLAGNIFLCVFLLIGSIMTAFIK). Topologically, residues 436–470 (SDLRRQKANQETGGNADSSVHPQHGETLPVKEVKM) are cytoplasmic. Residues 445–456 (QETGGNADSSVH) show a composition bias toward polar residues. Residues 445–470 (QETGGNADSSVHPQHGETLPVKEVKM) form a disordered region.

It belongs to the major facilitator superfamily. Feline leukemia virus subgroup C receptor (TC 2.A.1.28.1) family.

It is found in the cell membrane. The protein resides in the mitochondrion membrane. Its subcellular location is the endoplasmic reticulum membrane. The catalysed reaction is choline(out) = choline(in). It carries out the reaction ethanolamine(in) = ethanolamine(out). It catalyses the reaction heme b(in) = heme b(out). Choline uniporter that specifically mediates choline uptake at the blood-brain-barrier. Responsible for the majority of choline uptake across the blood-brain-barrier from the circulation into the brain. Choline, a nutrient critical for brain development, is a precursor of phosphatidylcholine, as well as betaine. Also mediates transport of ethanolamine. Choline and ethanolamine transport is not coupled with proton transport and is exclusively driven by the choline gradient across the plasma membrane. Also acts as a heme b transporter. The polypeptide is Choline/ethanolamine transporter flvcr2a (Danio rerio (Zebrafish)).